The sequence spans 389 residues: Aminomethyltransferase (389 aa).

This sequence belongs to the GcvT family. The glycine cleavage system is composed of four proteins: P, T, L and H.

The catalysed reaction is N(6)-[(R)-S(8)-aminomethyldihydrolipoyl]-L-lysyl-[protein] + (6S)-5,6,7,8-tetrahydrofolate = N(6)-[(R)-dihydrolipoyl]-L-lysyl-[protein] + (6R)-5,10-methylene-5,6,7,8-tetrahydrofolate + NH4(+). Functionally, the glycine cleavage system catalyzes the degradation of glycine. In Corynebacterium jeikeium (strain K411), this protein is Aminomethyltransferase.